The sequence spans 151 residues: Probable cGMP 3',5'-cyclic phosphodiesterase subunit delta (151 aa).

This sequence belongs to the PDE6D/unc-119 family. As to quaternary structure, interacts with Pde6.

The protein resides in the nucleus. It is found in the cytoplasm. The chain is Probable cGMP 3',5'-cyclic phosphodiesterase subunit delta from Drosophila willistoni (Fruit fly).